Consider the following 231-residue polypeptide: Chromosome partition protein MukE (231 aa).

The segment at 197 to 231 (RDGEAMPIEGGLSLDDSENDETSDNSAEGTGDEQP) is disordered.

Belongs to the MukE family. As to quaternary structure, interacts, and probably forms a ternary complex, with MukF and MukB. The complex formation is stimulated by calcium or magnesium.

The protein resides in the cytoplasm. It is found in the nucleoid. Involved in chromosome condensation, segregation and cell cycle progression. May participate in facilitating chromosome segregation by condensation DNA from both sides of a centrally located replisome during cell division. Probably acts via its interaction with MukB and MukF. The protein is Chromosome partition protein MukE of Photorhabdus laumondii subsp. laumondii (strain DSM 15139 / CIP 105565 / TT01) (Photorhabdus luminescens subsp. laumondii).